We begin with the raw amino-acid sequence, 415 residues long: Serine hydroxymethyltransferase 1 (415 aa).

(6S)-5,6,7,8-tetrahydrofolate contacts are provided by residues Leu122 and 126-128 (GHL). Lys230 is subject to N6-(pyridoxal phosphate)lysine.

This sequence belongs to the SHMT family. As to quaternary structure, homodimer. Pyridoxal 5'-phosphate is required as a cofactor.

It localises to the cytoplasm. It catalyses the reaction (6R)-5,10-methylene-5,6,7,8-tetrahydrofolate + glycine + H2O = (6S)-5,6,7,8-tetrahydrofolate + L-serine. It participates in one-carbon metabolism; tetrahydrofolate interconversion. It functions in the pathway amino-acid biosynthesis; glycine biosynthesis; glycine from L-serine: step 1/1. Its function is as follows. Catalyzes the reversible interconversion of serine and glycine with tetrahydrofolate (THF) serving as the one-carbon carrier. This reaction serves as the major source of one-carbon groups required for the biosynthesis of purines, thymidylate, methionine, and other important biomolecules. Also exhibits THF-independent aldolase activity toward beta-hydroxyamino acids, producing glycine and aldehydes, via a retro-aldol mechanism. The protein is Serine hydroxymethyltransferase 1 of Burkholderia thailandensis (strain ATCC 700388 / DSM 13276 / CCUG 48851 / CIP 106301 / E264).